A 370-amino-acid polypeptide reads, in one-letter code: MSTSDKHNTPQMAAITLLGLLLVASTIEIAGAQSIGVCYGMLGNNLPNHWEVIQLYKSRNIGRLRLYDPNHGALQALKGSNIEVMLGLPNSDVKHIASGMEHARWWVQKNVKDFWPDVKIKYIAVGNEISPVTGTSYLTSFLTPAMVNIYKAIGEAGLGNNIKVSTSVDMTLIGNSYPPSQGSFRNDARWFTDPIVGFLRDTRAPLLVNIYPYFSYSGNPGQISLPYSLFTAPNVVVQDGSRQYRNLFDAMLDSVYAALERSGGASVGIVVSESGWPSAGAFGATYDNAATYLRNLIQHAKEGSPRKPGPIETYIFAMFDENNKNPELEKHFGLFSPNKQPKYNLNFGVSGGVWDSSVETNATASLISEM.

A signal peptide spans 1–32; that stretch reads MSTSDKHNTPQMAAITLLGLLLVASTIEIAGA. Glutamine 33 bears the Pyrrolidone carboxylic acid mark. The active-site Proton donor is the glutamate 128. Glutamate 273 acts as the Nucleophile in catalysis. A propeptide spans 349-370 (removed in mature form); that stretch reads VSGGVWDSSVETNATASLISEM. An N-linked (GlcNAc...) asparagine glycan is attached at asparagine 361.

Belongs to the glycosyl hydrolase 17 family. As to expression, is expressed primarily in epidermal cell of healthy plant, and following induction by ethylene, accumulates in mesophyll cells.

It is found in the vacuole. The enzyme catalyses Hydrolysis of (1-&gt;3)-beta-D-glucosidic linkages in (1-&gt;3)-beta-D-glucans.. Its function is as follows. Implicated in the defense of plants against pathogens. In Nicotiana tabacum (Common tobacco), this protein is Glucan endo-1,3-beta-glucosidase, basic vacuolar isoform GLB.